The sequence spans 681 residues: Methionine--tRNA ligase (681 aa).

A 'HIGH' region motif is present at residues 14–24 (PYANGSIHLGH). Residues cysteine 145, cysteine 148, cysteine 158, and cysteine 161 each contribute to the Zn(2+) site. Positions 331-335 (KMSKS) match the 'KMSKS' region motif. Lysine 334 lines the ATP pocket. In terms of domain architecture, tRNA-binding spans 579 to 681 (AFAAVDLRIA…AGAKPGQRVH (103 aa)).

The protein belongs to the class-I aminoacyl-tRNA synthetase family. MetG type 1 subfamily. In terms of assembly, homodimer. The cofactor is Zn(2+).

It localises to the cytoplasm. It catalyses the reaction tRNA(Met) + L-methionine + ATP = L-methionyl-tRNA(Met) + AMP + diphosphate. In terms of biological role, is required not only for elongation of protein synthesis but also for the initiation of all mRNA translation through initiator tRNA(fMet) aminoacylation. The protein is Methionine--tRNA ligase of Azotobacter vinelandii (strain DJ / ATCC BAA-1303).